The primary structure comprises 240 residues: Prolactin-8A6 (240 aa).

An N-terminal signal peptide occupies residues 1-30 (MALLLSQPHFSGPLLLLVVSNLLLWEKAAS). 3 disulfides stabilise this stretch: Cys34/Cys41, Cys101/Cys216, and Cys233/Cys240. An N-linked (GlcNAc...) asparagine glycan is attached at Asn212.

Belongs to the somatotropin/prolactin family. Expressed specifically in the spongiotrophoblast and trophoblast giant cells from the junctional zone of the chorioallantoic placenta.

The protein resides in the secreted. The polypeptide is Prolactin-8A6 (Prl8a6) (Mus musculus (Mouse)).